A 511-amino-acid chain; its full sequence is Coatomer subunit delta (511 aa).

Residues 168 to 177 show a composition bias toward basic and acidic residues; that stretch reads QARRDAERQG. Residues 168 to 196 form a disordered region; sequence QARRDAERQGKKAPGFGGFGSSTVSGGST. Position 223 is a phosphoserine (Ser-223). Residues Lys-233 and Lys-241 each carry the N6-acetyllysine modification. Ser-244 carries the phosphoserine modification. One can recognise an MHD domain in the interval 271–511; that stretch reads MESVHMKIEE…TFLVDKYEIL (241 aa). N6-acetyllysine is present on residues Lys-309 and Lys-351. Phosphoserine is present on Ser-493.

This sequence belongs to the adaptor complexes medium subunit family. Delta-COP subfamily. In terms of assembly, oligomeric complex that consists of at least the alpha, beta, beta', gamma, delta, epsilon and zeta subunits. Ubiquitously expressed.

It localises to the cytoplasm. It is found in the golgi apparatus membrane. The protein localises to the cytoplasmic vesicle. The protein resides in the COPI-coated vesicle membrane. Its function is as follows. The coatomer is a cytosolic protein complex that binds to dilysine motifs and reversibly associates with Golgi non-clathrin-coated vesicles, which further mediate biosynthetic protein transport from the ER, via the Golgi up to the trans Golgi network. Coatomer complex is required for budding from Golgi membranes, and is essential for the retrograde Golgi-to-ER transport of dilysine-tagged proteins. In mammals, the coatomer can only be recruited by membranes associated to ADP-ribosylation factors (ARFs), which are small GTP-binding proteins; the complex also influences the Golgi structural integrity, as well as the processing, activity, and endocytic recycling of LDL receptors. The chain is Coatomer subunit delta (ARCN1) from Bos taurus (Bovine).